A 465-amino-acid polypeptide reads, in one-letter code: Cysteine--tRNA ligase (465 aa).

C27 provides a ligand contact to Zn(2+). Residues 29 to 39 (PTVYNFFHIGN) carry the 'HIGH' region motif. The Zn(2+) site is built by C207, H232, and E236. Positions 264-268 (KMSKS) match the 'KMSKS' region motif. K267 contacts ATP.

It belongs to the class-I aminoacyl-tRNA synthetase family. Monomer. The cofactor is Zn(2+).

The protein resides in the cytoplasm. It carries out the reaction tRNA(Cys) + L-cysteine + ATP = L-cysteinyl-tRNA(Cys) + AMP + diphosphate. The chain is Cysteine--tRNA ligase from Clostridium botulinum (strain Kyoto / Type A2).